Reading from the N-terminus, the 145-residue chain is D-aminoacyl-tRNA deacylase (145 aa).

Positions 137-138 (GP) match the Gly-cisPro motif, important for rejection of L-amino acids motif.

The protein belongs to the DTD family. In terms of assembly, homodimer.

Its subcellular location is the cytoplasm. It catalyses the reaction glycyl-tRNA(Ala) + H2O = tRNA(Ala) + glycine + H(+). The enzyme catalyses a D-aminoacyl-tRNA + H2O = a tRNA + a D-alpha-amino acid + H(+). An aminoacyl-tRNA editing enzyme that deacylates mischarged D-aminoacyl-tRNAs. Also deacylates mischarged glycyl-tRNA(Ala), protecting cells against glycine mischarging by AlaRS. Acts via tRNA-based rather than protein-based catalysis; rejects L-amino acids rather than detecting D-amino acids in the active site. By recycling D-aminoacyl-tRNA to D-amino acids and free tRNA molecules, this enzyme counteracts the toxicity associated with the formation of D-aminoacyl-tRNA entities in vivo and helps enforce protein L-homochirality. The protein is D-aminoacyl-tRNA deacylase of Citrobacter koseri (strain ATCC BAA-895 / CDC 4225-83 / SGSC4696).